We begin with the raw amino-acid sequence, 258 residues long: Ribosomal RNA large subunit methyltransferase E (258 aa).

S-adenosyl-L-methionine is bound by residues G58, W60, D78, D96, and D120. K160 acts as the Proton acceptor in catalysis.

This sequence belongs to the class I-like SAM-binding methyltransferase superfamily. RNA methyltransferase RlmE family.

It is found in the cytoplasm. It catalyses the reaction uridine(2552) in 23S rRNA + S-adenosyl-L-methionine = 2'-O-methyluridine(2552) in 23S rRNA + S-adenosyl-L-homocysteine + H(+). In terms of biological role, specifically methylates the uridine in position 2552 of 23S rRNA at the 2'-O position of the ribose in the fully assembled 50S ribosomal subunit. In Methanococcus maripaludis (strain C5 / ATCC BAA-1333), this protein is Ribosomal RNA large subunit methyltransferase E.